Consider the following 73-residue polypeptide: Pelophylaxin-1 (73 aa).

The signal sequence occupies residues 1–22 (MFTMKKSLLLVFFLGTIALSLC). Positions 23–41 (EEERGADDDNGGEITDEEI) are excised as a propeptide. Cys67 and Cys73 are oxidised to a cystine.

In terms of tissue distribution, expressed by the skin glands.

It localises to the secreted. Its function is as follows. Antimicrobial peptide. This chain is Pelophylaxin-1, found in Pelophylax fukienensis (Fukien gold-striped pond frog).